Consider the following 505-residue polypeptide: Formate--tetrahydrofolate ligase (505 aa).

Belongs to the formate--tetrahydrofolate ligase family.

It catalyses the reaction (6S)-5,6,7,8-tetrahydrofolate + formate + ATP = (6R)-10-formyltetrahydrofolate + ADP + phosphate. The protein operates within one-carbon metabolism; tetrahydrofolate interconversion. The sequence is that of Formate--tetrahydrofolate ligase (fhs) from Bifidobacterium longum (strain NCC 2705).